A 339-amino-acid polypeptide reads, in one-letter code: mRNA cap guanine-N(7) methyltransferase 2 (339 aa).

The mRNA cap 0 methyltransferase domain maps to 1-277 (MAVTPHHRLY…LYSTFVFQKP (277 aa)). S-adenosyl-L-methionine-binding positions include Lys-14, Asp-54, and 82–83 (DP). The tract at residues 314–339 (VSRTDILPPADNEKGILGPGPADMRL) is disordered.

This sequence belongs to the class I-like SAM-binding methyltransferase superfamily. mRNA cap 0 methyltransferase family.

The protein resides in the nucleus. The catalysed reaction is a 5'-end (5'-triphosphoguanosine)-ribonucleoside in mRNA + S-adenosyl-L-methionine = a 5'-end (N(7)-methyl 5'-triphosphoguanosine)-ribonucleoside in mRNA + S-adenosyl-L-homocysteine. Its function is as follows. mRNA-capping methyltransferase that methylates the N7 position of the added guanosine to the 5'-cap structure of mRNAs. Binds RNA containing 5'-terminal GpppC. This chain is mRNA cap guanine-N(7) methyltransferase 2, found in Oryza sativa subsp. japonica (Rice).